Reading from the N-terminus, the 107-residue chain is Putative double-stranded DNA mimic protein Spro_2690 (107 aa).

It belongs to the putative dsDNA mimic protein family.

In terms of biological role, may act as a double-stranded DNA (dsDNA) mimic. Probably regulates the activity of a dsDNA-binding protein. The sequence is that of Putative double-stranded DNA mimic protein Spro_2690 from Serratia proteamaculans (strain 568).